The sequence spans 310 residues: Olfactory receptor 2A12 (310 aa).

The Extracellular portion of the chain corresponds to 1–24; it reads MESNQTWITEVILLGFQVDPALEL. Asn4 is a glycosylation site (N-linked (GlcNAc...) asparagine). The chain crosses the membrane as a helical span at residues 25 to 48; that stretch reads FLFGFFLLFYSLTLMGNGIILGLI. At 49 to 56 the chain is on the cytoplasmic side; sequence YLDSRLHT. A helical transmembrane segment spans residues 57-78; it reads PMYVFLSHLAIVDMSYASSTVP. Residues 79–99 are Extracellular-facing; that stretch reads KMLANLVMHKKVISFAPCILQ. A disulfide bridge connects residues Cys96 and Cys188. Residues 100-119 form a helical membrane-spanning segment; that stretch reads TFLYLAFAITECLILVMMCY. Topologically, residues 120–138 are cytoplasmic; the sequence is DRYVAICHPLQYTLIMNWR. A helical membrane pass occupies residues 139–157; that stretch reads VCTVLASTCWIFSFLLALV. The Extracellular portion of the chain corresponds to 158-194; the sequence is HITLILRLPFCGPQKINHFFCQIMSVFKLACADTRLN. The chain crosses the membrane as a helical span at residues 195-218; it reads QVVLFAGSAFILVGPLCLVLVSYL. The Cytoplasmic segment spans residues 219-235; sequence HILVAILRIQSGEGRRK. The helical transmembrane segment at 236–258 threads the bilayer; sequence AFSTCSSHLCVVGLFFGSAIVMY. Topologically, residues 259–271 are extracellular; it reads MAPKSSHSQERRK. A helical membrane pass occupies residues 272–291; that stretch reads ILSLFYSLFNPILNPLIYSL. The Cytoplasmic portion of the chain corresponds to 292-310; the sequence is RNAEVKGALKRVLWKQRSM.

Belongs to the G-protein coupled receptor 1 family.

It localises to the cell membrane. In terms of biological role, odorant receptor. This chain is Olfactory receptor 2A12 (OR2A12), found in Homo sapiens (Human).